Here is a 234-residue protein sequence, read N- to C-terminus: Phycobilisome rod-core linker polypeptide cpcG (234 aa).

The region spanning 11-191 is the PBS-linker domain; the sequence is SSQNHRVNSF…PRYGSDFKER (181 aa).

Belongs to the phycobilisome linker protein family. The phycobilisome is a hemidiscoidal structure that is composed of two distinct substructures: a core complex and a number of rods radiating from the core.

The protein resides in the plastid. Its subcellular location is the chloroplast thylakoid membrane. Its function is as follows. Rod-core linker protein required for attachment of phycocyanin to allophycocyanin in cores of phycobilisomes. In terms of biological role, linker polypeptides determine the state of aggregation and the location of the disk-shaped phycobiliprotein units within the phycobilisome and modulate their spectroscopic properties in order to mediate a directed and optimal energy transfer. This is Phycobilisome rod-core linker polypeptide cpcG (cpcG) from Cyanidium caldarium (Red alga).